We begin with the raw amino-acid sequence, 1327 residues long: MRCGIVVNVTGPPPTIDRRYHDAVIVGLDNVVDKATRVHAAAWTKFLDDYLTRRPQRTGEDHCPLTHDDYRRFLAGKPDGVADFLAARGIRLPPGSPTDLTDDTVYGLQNLERQTFLQLLNTGVPEGKSIASFARRLQVAGVRVAAHTSHRNYGHTLDATGLAEVFAVFVDGAVTAELGLPAEPNPAGLIETAKRLGANPGRCVVIDSCQTGLRAGRNGGFALVIAVDAHGDAENLLSSGADAVVADLAAVTVGSGDAAISTIPDALQVYSQLKRLLTGRRPAVFLDFDGTLSDIVERPEAATLVDGAAEALRALAAQCPVAVISGRDLADVRNRVKVDGLWLAGSHGFELVAPDGSHHQNAAATAAIDGLAEAAAQLADALREIAGAVVEHKRFAVAVHYRNVADDSVDNLIAAVRRLGHAAGLRVTTGRKVVELRPDIAWDKGKALDWIGERLGPAEVGPDLRLPIYIGDDLTDEDAFDAVRFTGVGIVVRHNEHGDRRSAATFRLECPYTVCQFLSQLACDLQEAVQHDDPWTLVFHGYDPGQERLREALCAVGNGYLGSRGCAPESAESEAHYPGTYVAGVYNQLTDHIEGCTVDNESLVNLPNWLSLTFRIDGGAWFNVDTVELLSYRQTFDLRRATLTRSLRFRDAGGRVTTMTQERFASMNRPNLVALQTRIESENWSGTVDFRSLVDGGVHNTLVDRYRQLSSQHLTTAEIEVLADSVLLRTQTSQSGIAIAVAARSTLWRDGQRVDAQYRVARDTNRGGHDIQVTLSAGQSVTLEKVATIFTSRDAATLTAAISAQRCLGEAGRYAELCQQHVRAWARLWERCAIDLTGNTEELRLVRLHLLHLLQTISPHTAELDAGVPARGLNGEAYRGHVFWDALFVAPVLSLRMPKVARSLLDYRYRRLPAARRAAHRAGHLGAMYPWQSGSDGSEVSQQLHLNPRSGRWTPDPSDRAHHVGLAVAYNAWHYYQVTGDRQYLVDCGAELLVEIARFWVGLAKLDDSRGRYLIRGVIGPDEFHSGYPGNEYDGIDNNAYTNVMAVWVILRAMEALDLLPLTDRRHLIEKLGLTTQERDQWDDVSRRMFVPFHDGVISQFEGYSELAELDWDHYRHRYGNIQRLDRILEAEGDSVNNYQASKQADALMLLYLLSSDELIGLLARLGYRFAPTQIPGTVDYYLARTSDGSTLSAVVHAWVLARANRSNAMEYFRQVLRSDIADVQGGTTQEGIHLAAMAGSIDLLQRCYSGLELRDDRLVLSPQWPEALGPLEFPFVYRRHQLSLRISGRSATLTAESGDAEPIEVECRGHVQRLRCGHTIEVGCSR.

884-885 (WD) lines the substrate pocket. Residue Glu1023 is the Proton donor of the active site. 1143–1144 (KQ) contributes to the substrate binding site.

This sequence in the N-terminal section; belongs to the trehalose phosphatase family. It in the C-terminal section; belongs to the glycosyl hydrolase 65 family.

This is an uncharacterized protein from Mycobacterium tuberculosis (strain CDC 1551 / Oshkosh).